Consider the following 142-residue polypeptide: MSDREFSSNDDLSLPKATVQKIITEILPPSSGQTFSKDARDLLMECCVEFITLISSEANDISEKEAKKTIACEHVERALRDLGFGDYIPEVLAVAEEHKEQLKSREKKQSKMEQSGLTEEELLRQQQELFRSATEKYNAAPE.

Belongs to the NC2 beta/DR1 family. Forms the NCT transcriptional regulatory complex with nctA and mot1.

The protein resides in the nucleus. Its function is as follows. Part of the NCT transcriptional regulatory complex that acts as a key regulator of ergosterol biosynthesis and the azole exporter cdr1B. The NCT complex binds the promoters of genes linked to azole susceptibility, and especially represses the expression of cdr1B transporter. The polypeptide is NCT transcriptional regulatory complex subunit B (Aspergillus fumigatus (strain CBS 144.89 / FGSC A1163 / CEA10) (Neosartorya fumigata)).